A 612-amino-acid chain; its full sequence is Rhotekin-2 (612 aa).

An REM-1 domain is found at 3–79 (IKRKKIRESA…LRSQMGESNT (77 aa)). Residues 285–392 (DEAMMGFLNQ…WMEAFWQHFY (108 aa)) form the PH domain. Disordered stretches follow at residues 483 to 530 (RNKP…SDKE) and 574 to 612 (ENKAELDTGTQEPIKPVPTPRQKSLREKLDPRVWLQSQV). A compositionally biased stretch (low complexity) spans 486-498 (PPLLSSDDPSTSS).

The protein is Rhotekin-2 (rtkn2) of Xenopus laevis (African clawed frog).